We begin with the raw amino-acid sequence, 335 residues long: Beta-hexosaminidase (335 aa).

Residues aspartate 60, arginine 68, arginine 133, and 163–164 each bind substrate; that span reads KH. The active-site Proton donor/acceptor is histidine 176. Aspartate 247 (nucleophile) is an active-site residue.

This sequence belongs to the glycosyl hydrolase 3 family. NagZ subfamily.

It is found in the cytoplasm. The enzyme catalyses Hydrolysis of terminal non-reducing N-acetyl-D-hexosamine residues in N-acetyl-beta-D-hexosaminides.. It functions in the pathway cell wall biogenesis; peptidoglycan recycling. Its function is as follows. Plays a role in peptidoglycan recycling by cleaving the terminal beta-1,4-linked N-acetylglucosamine (GlcNAc) from peptide-linked peptidoglycan fragments, giving rise to free GlcNAc, anhydro-N-acetylmuramic acid and anhydro-N-acetylmuramic acid-linked peptides. The sequence is that of Beta-hexosaminidase from Xylella fastidiosa (strain M12).